We begin with the raw amino-acid sequence, 350 residues long: UDP-3-O-acylglucosamine N-acyltransferase (350 aa).

The Proton acceptor role is filled by H248.

It belongs to the transferase hexapeptide repeat family. LpxD subfamily. In terms of assembly, homotrimer.

The enzyme catalyses a UDP-3-O-[(3R)-3-hydroxyacyl]-alpha-D-glucosamine + a (3R)-hydroxyacyl-[ACP] = a UDP-2-N,3-O-bis[(3R)-3-hydroxyacyl]-alpha-D-glucosamine + holo-[ACP] + H(+). Its pathway is bacterial outer membrane biogenesis; LPS lipid A biosynthesis. Functionally, catalyzes the N-acylation of UDP-3-O-acylglucosamine using 3-hydroxyacyl-ACP as the acyl donor. Is involved in the biosynthesis of lipid A, a phosphorylated glycolipid that anchors the lipopolysaccharide to the outer membrane of the cell. The chain is UDP-3-O-acylglucosamine N-acyltransferase from Nostoc punctiforme (strain ATCC 29133 / PCC 73102).